We begin with the raw amino-acid sequence, 269 residues long: Tryptophan synthase alpha chain (269 aa).

Active-site proton acceptor residues include glutamate 49 and aspartate 60.

This sequence belongs to the TrpA family. In terms of assembly, tetramer of two alpha and two beta chains.

The catalysed reaction is (1S,2R)-1-C-(indol-3-yl)glycerol 3-phosphate + L-serine = D-glyceraldehyde 3-phosphate + L-tryptophan + H2O. The protein operates within amino-acid biosynthesis; L-tryptophan biosynthesis; L-tryptophan from chorismate: step 5/5. Its function is as follows. The alpha subunit is responsible for the aldol cleavage of indoleglycerol phosphate to indole and glyceraldehyde 3-phosphate. This chain is Tryptophan synthase alpha chain, found in Actinobacillus pleuropneumoniae serotype 3 (strain JL03).